The sequence spans 579 residues: Isocitrate dehydrogenase kinase/phosphatase (579 aa).

ATP is bound by residues 324–330 and Lys345; that span reads ADGTPGM. Asp380 is an active-site residue.

It belongs to the AceK family.

The protein localises to the cytoplasm. It catalyses the reaction L-seryl-[isocitrate dehydrogenase] + ATP = O-phospho-L-seryl-[isocitrate dehydrogenase] + ADP + H(+). Its function is as follows. Bifunctional enzyme which can phosphorylate or dephosphorylate isocitrate dehydrogenase (IDH) on a specific serine residue. This is a regulatory mechanism which enables bacteria to bypass the Krebs cycle via the glyoxylate shunt in response to the source of carbon. When bacteria are grown on glucose, IDH is fully active and unphosphorylated, but when grown on acetate or ethanol, the activity of IDH declines drastically concomitant with its phosphorylation. This is Isocitrate dehydrogenase kinase/phosphatase from Xanthomonas euvesicatoria pv. vesicatoria (strain 85-10) (Xanthomonas campestris pv. vesicatoria).